The primary structure comprises 250 residues: Anamorsin homolog 2 (250 aa).

The interval 1 to 102 is N-terminal SAM-like domain; that stretch reads MNLKITINQQ…QTKKINIPQQ (102 aa). Residues 102–149 are linker; sequence QDFNNCYGKYDYIEQKFQNQINFFKQVDLKGNQETIDENELLNDGVEV. [2Fe-2S] cluster is bound by residues Cys155, Cys162, Cys165, and Cys167. Positions 155-167 are fe-S binding site A; that stretch reads CASKPRACANCTC. Positions 193, 196, 204, and 207 each coordinate [4Fe-4S] cluster. 2 short sequence motifs (cx2C motif) span residues 193–196 and 204–207; these read CGSC and CANC. The segment at 193-207 is fe-S binding site B; it reads CGSCYLGDAFRCANC.

Belongs to the anamorsin family. Monomer. It depends on [2Fe-2S] cluster as a cofactor. [4Fe-4S] cluster is required as a cofactor.

The protein resides in the cytoplasm. It is found in the mitochondrion intermembrane space. In terms of biological role, component of the cytosolic iron-sulfur (Fe-S) protein assembly (CIA) machinery. Required for the maturation of extramitochondrial Fe-S proteins. Part of an electron transfer chain functioning in an early step of cytosolic Fe-S biogenesis, facilitating the de novo assembly of a [4Fe-4S] cluster on the cytosolic Fe-S scaffold complex. Electrons are transferred from NADPH via a FAD- and FMN-containing diflavin oxidoreductase. Together with the diflavin oxidoreductase, also required for the assembly of the diferric tyrosyl radical cofactor of ribonucleotide reductase (RNR), probably by providing electrons for reduction during radical cofactor maturation in the catalytic small subunit. The polypeptide is Anamorsin homolog 2 (Paramecium tetraurelia).